We begin with the raw amino-acid sequence, 293 residues long: 1D-myo-inositol 2-acetamido-2-deoxy-alpha-D-glucopyranoside deacetylase (293 aa).

Zn(2+) contacts are provided by His-16, Asp-19, and His-156.

The protein belongs to the MshB deacetylase family. It depends on Zn(2+) as a cofactor.

The catalysed reaction is 1D-myo-inositol 2-acetamido-2-deoxy-alpha-D-glucopyranoside + H2O = 1D-myo-inositol 2-amino-2-deoxy-alpha-D-glucopyranoside + acetate. Functionally, catalyzes the deacetylation of 1D-myo-inositol 2-acetamido-2-deoxy-alpha-D-glucopyranoside (GlcNAc-Ins) in the mycothiol biosynthesis pathway. This Nakamurella multipartita (strain ATCC 700099 / DSM 44233 / CIP 104796 / JCM 9543 / NBRC 105858 / Y-104) (Microsphaera multipartita) protein is 1D-myo-inositol 2-acetamido-2-deoxy-alpha-D-glucopyranoside deacetylase.